The chain runs to 61 residues: Small ribosomal subunit protein uS14 (61 aa).

Zn(2+) is bound by residues Cys-24, Cys-27, Cys-40, and Cys-43.

The protein belongs to the universal ribosomal protein uS14 family. Zinc-binding uS14 subfamily. Part of the 30S ribosomal subunit. Contacts proteins S3 and S10. The cofactor is Zn(2+).

Functionally, binds 16S rRNA, required for the assembly of 30S particles and may also be responsible for determining the conformation of the 16S rRNA at the A site. The chain is Small ribosomal subunit protein uS14 from Halothermothrix orenii (strain H 168 / OCM 544 / DSM 9562).